We begin with the raw amino-acid sequence, 157 residues long: Putative pre-16S rRNA nuclease (157 aa).

The protein belongs to the YqgF nuclease family.

Its subcellular location is the cytoplasm. In terms of biological role, could be a nuclease involved in processing of the 5'-end of pre-16S rRNA. The chain is Putative pre-16S rRNA nuclease from Orientia tsutsugamushi (strain Ikeda) (Rickettsia tsutsugamushi).